A 443-amino-acid chain; its full sequence is Probable glycine dehydrogenase (decarboxylating) subunit 1 (443 aa).

It belongs to the GcvP family. N-terminal subunit subfamily. The glycine cleavage system is composed of four proteins: P, T, L and H. In this organism, the P 'protein' is a heterodimer of two subunits.

It catalyses the reaction N(6)-[(R)-lipoyl]-L-lysyl-[glycine-cleavage complex H protein] + glycine + H(+) = N(6)-[(R)-S(8)-aminomethyldihydrolipoyl]-L-lysyl-[glycine-cleavage complex H protein] + CO2. In terms of biological role, the glycine cleavage system catalyzes the degradation of glycine. The P protein binds the alpha-amino group of glycine through its pyridoxal phosphate cofactor; CO(2) is released and the remaining methylamine moiety is then transferred to the lipoamide cofactor of the H protein. The polypeptide is Probable glycine dehydrogenase (decarboxylating) subunit 1 (Maridesulfovibrio salexigens (strain ATCC 14822 / DSM 2638 / NCIMB 8403 / VKM B-1763) (Desulfovibrio salexigens)).